The sequence spans 328 residues: Methionyl-tRNA formyltransferase (328 aa).

121–124 (SLLP) lines the (6S)-5,6,7,8-tetrahydrofolate pocket.

The protein belongs to the Fmt family.

The catalysed reaction is L-methionyl-tRNA(fMet) + (6R)-10-formyltetrahydrofolate = N-formyl-L-methionyl-tRNA(fMet) + (6S)-5,6,7,8-tetrahydrofolate + H(+). In terms of biological role, attaches a formyl group to the free amino group of methionyl-tRNA(fMet). The formyl group appears to play a dual role in the initiator identity of N-formylmethionyl-tRNA by promoting its recognition by IF2 and preventing the misappropriation of this tRNA by the elongation apparatus. This chain is Methionyl-tRNA formyltransferase, found in Paraburkholderia xenovorans (strain LB400).